Here is a 502-residue protein sequence, read N- to C-terminus: Maturase K (502 aa).

This sequence belongs to the intron maturase 2 family. MatK subfamily.

Its subcellular location is the plastid. It is found in the chloroplast. In terms of biological role, usually encoded in the trnK tRNA gene intron. Probably assists in splicing its own and other chloroplast group II introns. The protein is Maturase K of Theobroma cacao (Cacao).